Here is a 208-residue protein sequence, read N- to C-terminus: Regulator of G-protein signaling 4 (208 aa).

S-palmitoyl cysteine attachment occurs at residues cysteine 2, cysteine 12, and cysteine 95. The 117-residue stretch at 62–178 folds into the RGS domain; it reads SLENLIHHDR…LKSPYLDLVS (117 aa).

Post-translationally, palmitoylated on Cys-2 and/or Cys-12. In terms of processing, phosphorylated by cyclic GMP-dependent protein kinase. In terms of tissue distribution, expressed in the developing nervous system.

In terms of biological role, inhibits signal transduction by increasing the GTPase activity of G protein alpha subunits thereby driving them into their inactive GDP-bound form. Activity on G(z)-alpha is inhibited by phosphorylation of the G-protein. Activity on G(z)-alpha and G(i)-alpha-1 is inhibited by palmitoylation of the G-protein. The chain is Regulator of G-protein signaling 4 (RGS4) from Gallus gallus (Chicken).